The chain runs to 393 residues: tRNA (guanine-N(7)-)-methyltransferase (393 aa).

Residues glutamate 124, glutamate 149, and aspartate 176 each contribute to the S-adenosyl-L-methionine site. Aspartate 232 serves as a coordination point for substrate.

It belongs to the class I-like SAM-binding methyltransferase superfamily. TrmB family.

The enzyme catalyses guanosine(46) in tRNA + S-adenosyl-L-methionine = N(7)-methylguanosine(46) in tRNA + S-adenosyl-L-homocysteine. It functions in the pathway tRNA modification; N(7)-methylguanine-tRNA biosynthesis. Catalyzes the formation of N(7)-methylguanine at position 46 (m7G46) in tRNA. The polypeptide is tRNA (guanine-N(7)-)-methyltransferase (Helicobacter pylori (strain ATCC 700392 / 26695) (Campylobacter pylori)).